Here is an 89-residue protein sequence, read N- to C-terminus: uncharacterized protein (89 aa).

This is an uncharacterized protein from Sinorhizobium fredii (strain NBRC 101917 / NGR234).